We begin with the raw amino-acid sequence, 191 residues long: Adenine phosphoribosyltransferase (191 aa).

Belongs to the purine/pyrimidine phosphoribosyltransferase family. In terms of assembly, homodimer.

Its subcellular location is the cytoplasm. The enzyme catalyses AMP + diphosphate = 5-phospho-alpha-D-ribose 1-diphosphate + adenine. Its pathway is purine metabolism; AMP biosynthesis via salvage pathway; AMP from adenine: step 1/1. Functionally, catalyzes a salvage reaction resulting in the formation of AMP, that is energically less costly than de novo synthesis. This Nocardia farcinica (strain IFM 10152) protein is Adenine phosphoribosyltransferase.